We begin with the raw amino-acid sequence, 227 residues long: Small ribosomal subunit protein uS3m (227 aa).

It belongs to the universal ribosomal protein uS3 family. As to quaternary structure, component of the mitochondrial small ribosomal subunit (mt-SSU). Mature yeast 74S mitochondrial ribosomes consist of a small (37S) and a large (54S) subunit. The 37S small subunit contains a 15S ribosomal RNA (15S mt-rRNA) and at least 32 different proteins. The 54S large subunit contains a 21S rRNA (21S mt-rRNA) and at least 45 different proteins. uS3m, uS4m and uS5m form the narrow entry site of the mRNA channel.

It is found in the mitochondrion. In terms of biological role, essential for mitochondrial protein synthesis and required for the maturation of small ribosomal subunits. Functionally, component of the mitochondrial ribosome (mitoribosome), a dedicated translation machinery responsible for the synthesis of mitochondrial genome-encoded proteins, including at least some of the essential transmembrane subunits of the mitochondrial respiratory chain. The mitoribosomes are attached to the mitochondrial inner membrane and translation products are cotranslationally integrated into the membrane. uS3m is essential for mitochondrial protein synthesis and required for the maturation of small ribosomal subunits. The protein is Small ribosomal subunit protein uS3m (var1) of Schizosaccharomyces pombe (strain 972 / ATCC 24843) (Fission yeast).